Here is a 279-residue protein sequence, read N- to C-terminus: 4-diphosphocytidyl-2-C-methyl-D-erythritol kinase (279 aa).

Residue K10 is part of the active site. 91–101 (PVASGIGGGSA) serves as a coordination point for ATP. Residue D130 is part of the active site.

The protein belongs to the GHMP kinase family. IspE subfamily.

It catalyses the reaction 4-CDP-2-C-methyl-D-erythritol + ATP = 4-CDP-2-C-methyl-D-erythritol 2-phosphate + ADP + H(+). It functions in the pathway isoprenoid biosynthesis; isopentenyl diphosphate biosynthesis via DXP pathway; isopentenyl diphosphate from 1-deoxy-D-xylulose 5-phosphate: step 3/6. Functionally, catalyzes the phosphorylation of the position 2 hydroxy group of 4-diphosphocytidyl-2C-methyl-D-erythritol. The protein is 4-diphosphocytidyl-2-C-methyl-D-erythritol kinase of Ruegeria pomeroyi (strain ATCC 700808 / DSM 15171 / DSS-3) (Silicibacter pomeroyi).